The chain runs to 209 residues: Elongation factor Ts, chloroplastic (209 aa).

Belongs to the EF-Ts family.

The protein localises to the plastid. Its subcellular location is the chloroplast. In terms of biological role, associates with the EF-Tu.GDP complex and induces the exchange of GDP to GTP. It remains bound to the aminoacyl-tRNA.EF-Tu.GTP complex up to the GTP hydrolysis stage on the ribosome. This is Elongation factor Ts, chloroplastic (tsf) from Cyanidioschyzon merolae (strain NIES-3377 / 10D) (Unicellular red alga).